A 358-amino-acid polypeptide reads, in one-letter code: UDP-N-acetylglucosamine--N-acetylmuramyl-(pentapeptide) pyrophosphoryl-undecaprenol N-acetylglucosamine transferase (358 aa).

Residues 11–13 (TGG), Arg163, Ser191, Ile245, and Gln290 each bind UDP-N-acetyl-alpha-D-glucosamine.

It belongs to the glycosyltransferase 28 family. MurG subfamily.

It is found in the cell inner membrane. The catalysed reaction is di-trans,octa-cis-undecaprenyl diphospho-N-acetyl-alpha-D-muramoyl-L-alanyl-D-glutamyl-meso-2,6-diaminopimeloyl-D-alanyl-D-alanine + UDP-N-acetyl-alpha-D-glucosamine = di-trans,octa-cis-undecaprenyl diphospho-[N-acetyl-alpha-D-glucosaminyl-(1-&gt;4)]-N-acetyl-alpha-D-muramoyl-L-alanyl-D-glutamyl-meso-2,6-diaminopimeloyl-D-alanyl-D-alanine + UDP + H(+). It functions in the pathway cell wall biogenesis; peptidoglycan biosynthesis. Functionally, cell wall formation. Catalyzes the transfer of a GlcNAc subunit on undecaprenyl-pyrophosphoryl-MurNAc-pentapeptide (lipid intermediate I) to form undecaprenyl-pyrophosphoryl-MurNAc-(pentapeptide)GlcNAc (lipid intermediate II). The sequence is that of UDP-N-acetylglucosamine--N-acetylmuramyl-(pentapeptide) pyrophosphoryl-undecaprenol N-acetylglucosamine transferase from Herminiimonas arsenicoxydans.